We begin with the raw amino-acid sequence, 305 residues long: N-acetylneuraminate lyase A (305 aa).

Aceneuramate-binding residues include Thr51 and Thr52. The Proton donor role is filled by Tyr143. Residue Lys173 is the Schiff-base intermediate with substrate of the active site. Aceneuramate contacts are provided by Ser175, Gly197, Asp199, Glu200, and Ser216.

It belongs to the DapA family. NanA subfamily. As to quaternary structure, homotetramer.

The protein localises to the cytoplasm. The catalysed reaction is aceneuramate = aldehydo-N-acetyl-D-mannosamine + pyruvate. The protein operates within amino-sugar metabolism; N-acetylneuraminate degradation. Its function is as follows. Catalyzes the cleavage of N-acetylneuraminic acid (sialic acid) to form pyruvate and N-acetylmannosamine via a Schiff base intermediate. It prevents sialic acids from being recycled and returning to the cell surface. Involved in the N-glycolylneuraminic acid (Neu5Gc) degradation pathway. In Xenopus laevis (African clawed frog), this protein is N-acetylneuraminate lyase A (npl-a).